A 100-amino-acid polypeptide reads, in one-letter code: Urease subunit gamma (100 aa).

Belongs to the urease gamma subunit family. Heterotrimer of UreA (gamma), UreB (beta) and UreC (alpha) subunits. Three heterotrimers associate to form the active enzyme.

The protein localises to the cytoplasm. It catalyses the reaction urea + 2 H2O + H(+) = hydrogencarbonate + 2 NH4(+). Its pathway is nitrogen metabolism; urea degradation; CO(2) and NH(3) from urea (urease route): step 1/1. The sequence is that of Urease subunit gamma from Haemophilus influenzae (strain PittEE).